The sequence spans 89 residues: Small ribosomal subunit protein uS15 (89 aa).

It belongs to the universal ribosomal protein uS15 family. As to quaternary structure, part of the 30S ribosomal subunit. Forms a bridge to the 50S subunit in the 70S ribosome, contacting the 23S rRNA.

Functionally, one of the primary rRNA binding proteins, it binds directly to 16S rRNA where it helps nucleate assembly of the platform of the 30S subunit by binding and bridging several RNA helices of the 16S rRNA. Its function is as follows. Forms an intersubunit bridge (bridge B4) with the 23S rRNA of the 50S subunit in the ribosome. This chain is Small ribosomal subunit protein uS15, found in Mycobacterium bovis (strain ATCC BAA-935 / AF2122/97).